Reading from the N-terminus, the 597-residue chain is MGEALNGLKRNIMCGDARESHIGQKVTVMGWVQRNRNLGGLQFIDLRDREGILQVVFNDDLGEEILEKAKSIRPEYCIAVTGEIVKRESVNPNMPTGMVELKAEELKILSESDTPPIYIKEDLDAAESIRLKYRYLDLRRPDMQNIFKIRHKTTKAIRDYLDQNGFLEMETPILTKSTPEGARDYLVPSRNYPGMFYALPQSPQLFKQLLMVSGFDRYFQIVKCFRDEDLRANRQPEFTQVDLEMSFVEQDDVMALNECLIKHVFKEVLGVDVKTPIKRMTFKDAMEKYGSDKPDLRFGMEITNLSDVVKECGFKVFTDAVANGGSVRGLCLEGGASMGRKDIDRLGEFVKTFKAKGLAWIQLKEEGVKSPIAKFFSEEELNKIIETMGAKTGDLILIVADKNSVVLKALGELRLELSRKFDLVKDKSEFNFTWITEFDLLEYDEEEGRYFAAHHPFTMPMDEDIKYLDTDPGRVRAKAYDLVLNGEELGGGSIRIHDTKLQEKMFEVLGFTQESAWERFGFLLEAFKFGPPPHGGLAFGLDRMIMFLAGTENIKDVITFPKNQNAFCYLTEAPNIVDEEQLKELGIETIKKEDTAE.

L-aspartate is bound at residue glutamate 180. The aspartate stretch occupies residues 204-207; sequence QLFK. An L-aspartate-binding site is contributed by arginine 226. ATP is bound by residues 226-228 and glutamine 235; that span reads RDE. Position 454 (histidine 454) interacts with L-aspartate. An ATP-binding site is contributed by glutamate 488. Residue arginine 495 participates in L-aspartate binding. 540-543 serves as a coordination point for ATP; the sequence is GLDR.

Belongs to the class-II aminoacyl-tRNA synthetase family. Type 1 subfamily. In terms of assembly, homodimer.

The protein localises to the cytoplasm. The enzyme catalyses tRNA(Asp) + L-aspartate + ATP = L-aspartyl-tRNA(Asp) + AMP + diphosphate. Catalyzes the attachment of L-aspartate to tRNA(Asp) in a two-step reaction: L-aspartate is first activated by ATP to form Asp-AMP and then transferred to the acceptor end of tRNA(Asp). The chain is Aspartate--tRNA ligase from Clostridium perfringens (strain SM101 / Type A).